The chain runs to 479 residues: Bifunctional aspartate aminotransferase and glutamate/aspartate-prephenate aminotransferase (479 aa).

The N-terminal 79 residues, 1–79 (MAATTTTSSS…VEVDISLSPR (79 aa)), are a transit peptide targeting the chloroplast. Residue G111 participates in L-aspartate binding. Pyridoxal 5'-phosphate is bound at residue 172-173 (AK). W197 and N247 together coordinate L-aspartate. Pyridoxal 5'-phosphate contacts are provided by residues N247, Y279, and 307–309 (GFS). N6-(pyridoxal phosphate)lysine is present on K310. R318 is a pyridoxal 5'-phosphate binding site. L-aspartate is bound at residue R449.

It belongs to the class-I pyridoxal-phosphate-dependent aminotransferase family. Homodimer. Requires pyridoxal 5'-phosphate as cofactor. In terms of tissue distribution, expressed in flowers, pistils, stamens, ovaries and at lower levels in leaves and sepals.

It is found in the plastid. It localises to the chloroplast. The enzyme catalyses L-aspartate + 2-oxoglutarate = oxaloacetate + L-glutamate. It catalyses the reaction L-arogenate + oxaloacetate = prephenate + L-aspartate. It carries out the reaction L-arogenate + 2-oxoglutarate = prephenate + L-glutamate. The protein operates within amino-acid biosynthesis; L-phenylalanine biosynthesis; L-arogenate from prephenate (L-Asp route): step 1/1. Its pathway is amino-acid biosynthesis; L-phenylalanine biosynthesis; L-arogenate from prephenate (L-Glu route): step 1/1. In terms of biological role, prokaryotic-type aspartate aminotransferase. Also has a prenate transaminase activity. Involved in the aromatic amino acids biosynthesis pathway via the arogenate route. Required for the transamination of prephenate into arogenate. Can use 2-oxoglutarate, oxaloacetate and prephenate as substrates, but not phenylpyruvate or 4-hydroxyphenylpyruvate. The protein is Bifunctional aspartate aminotransferase and glutamate/aspartate-prephenate aminotransferase of Petunia hybrida (Petunia).